Consider the following 370-residue polypeptide: 4-hydroxy-3-methylbut-2-en-1-yl diphosphate synthase (flavodoxin) (370 aa).

[4Fe-4S] cluster is bound by residues Cys270, Cys273, Cys305, and Glu312.

It belongs to the IspG family. [4Fe-4S] cluster serves as cofactor.

The enzyme catalyses (2E)-4-hydroxy-3-methylbut-2-enyl diphosphate + oxidized [flavodoxin] + H2O + 2 H(+) = 2-C-methyl-D-erythritol 2,4-cyclic diphosphate + reduced [flavodoxin]. The protein operates within isoprenoid biosynthesis; isopentenyl diphosphate biosynthesis via DXP pathway; isopentenyl diphosphate from 1-deoxy-D-xylulose 5-phosphate: step 5/6. Functionally, converts 2C-methyl-D-erythritol 2,4-cyclodiphosphate (ME-2,4cPP) into 1-hydroxy-2-methyl-2-(E)-butenyl 4-diphosphate. The polypeptide is 4-hydroxy-3-methylbut-2-en-1-yl diphosphate synthase (flavodoxin) (Saccharophagus degradans (strain 2-40 / ATCC 43961 / DSM 17024)).